The following is a 181-amino-acid chain: 3-hexulose-6-phosphate isomerase (181 aa).

Residues 27-168 enclose the SIS domain; the sequence is ILSLVDAAGR…IAKLVDQKGL (142 aa). Residues serine 45 and 84–89 contribute to the substrate site; that span reads SGSGST. The active-site Proton acceptor is glutamate 148.

This sequence belongs to the SIS family. PHI subfamily. As to quaternary structure, homodimer.

It catalyses the reaction D-arabino-hex-3-ulose 6-phosphate = beta-D-fructose 6-phosphate. The protein operates within one-carbon metabolism; formaldehyde assimilation via RuMP pathway; D-fructose 6-phosphate from D-ribulose 5-phosphate and formaldehyde: step 2/2. Catalyzes the isomerization between 3-hexulose 6-phosphate and fructose 6-phosphate. This Methylomonas aminofaciens protein is 3-hexulose-6-phosphate isomerase (rmpB).